A 435-amino-acid chain; its full sequence is ATP-dependent protease ATPase subunit HslU (435 aa).

ATP-binding positions include Ile-18, 60–65, Asp-248, Glu-313, and Arg-385; that span reads GVGKTE.

The protein belongs to the ClpX chaperone family. HslU subfamily. In terms of assembly, a double ring-shaped homohexamer of HslV is capped on each side by a ring-shaped HslU homohexamer. The assembly of the HslU/HslV complex is dependent on binding of ATP.

The protein resides in the cytoplasm. Its function is as follows. ATPase subunit of a proteasome-like degradation complex; this subunit has chaperone activity. The binding of ATP and its subsequent hydrolysis by HslU are essential for unfolding of protein substrates subsequently hydrolyzed by HslV. HslU recognizes the N-terminal part of its protein substrates and unfolds these before they are guided to HslV for hydrolysis. This chain is ATP-dependent protease ATPase subunit HslU, found in Rhizobium leguminosarum bv. trifolii (strain WSM2304).